Here is a 181-residue protein sequence, read N- to C-terminus: ADP-ribosylation factor 1 (181 aa).

G2 carries N-myristoyl glycine lipidation. Residues 24–31 (GLDAAGKT), 67–71 (DVGGQ), and 126–129 (NKQD) each bind GTP.

The protein belongs to the small GTPase superfamily. Arf family.

The protein resides in the golgi apparatus. It catalyses the reaction GTP + H2O = GDP + phosphate + H(+). Functionally, GTP-binding protein involved in protein trafficking; may modulate vesicle budding and uncoating within the Golgi apparatus. This Chlamydomonas reinhardtii (Chlamydomonas smithii) protein is ADP-ribosylation factor 1 (ARF1).